The following is a 1366-amino-acid chain: Protein HUA2-LIKE 2 (1366 aa).

Residues 24–81 enclose the PWWP domain; sequence VGDLVLAKVKGFPAWPAVVSEPEKWDASPDSKKVFVHFFGTQQIAFCNPGDVEAFTEE. The span at 111–124 shows a compositional bias: basic and acidic residues; the sequence is LKQQERASDPKSAE. Disordered regions lie at residues 111-138, 203-319, 384-403, 427-451, and 787-808; these read LKQQ…TLMP, TYSS…SGSK, NVQT…CEEN, EANS…AQTS, and SESA…TGEK. Over residues 213 to 252 the composition is skewed to polar residues; sequence VRSQNCAPQNETCPVQRSKSPSRLQTEKLQSSMLQNSDGG. Over residues 391-403 the composition is skewed to basic and acidic residues; the sequence is SHEKFTERPCEEN. A compositionally biased stretch (polar residues) spans 787-803; it reads SESANDMQNNSSGSPNI. Residues 836–977 form the CID domain; it reads DVQSTRESYE…HHIRELDSHS (142 aa). 2 disordered regions span residues 1027–1076 and 1128–1366; these read LKDE…TAER and TSHQ…QRSD. Residues 1032–1052 are compositionally biased toward acidic residues; it reads GGSDSEGGCDSEGGSDSDGGD. The segment covering 1057–1066 has biased composition (basic and acidic residues); it reads TPEHESRILE. Pro residues predominate over residues 1138-1152; the sequence is PPLPSSSPPPPPAPP. The span at 1191–1223 shows a compositional bias: polar residues; that stretch reads LSGSTMHYQGPESSYISGVQLTNSIPQADGSNF. A compositionally biased stretch (pro residues) spans 1229 to 1244; that stretch reads PSHPHPHPPPPPPPPQ. Composition is skewed to basic and acidic residues over residues 1251 to 1262 and 1275 to 1298; these read EPGHVLKSHRDA and CDER…RDNW. Residues 1299-1309 show a composition bias toward low complexity; that stretch reads RYPPSSSYGSR.

Expressed throughout young primordia, and vegetative and reproductive apices.

The protein resides in the nucleus. Its function is as follows. Probable transcription factor that acts with partial redundancy with HULK1 and HULK3. Plays diverse and essential roles in the control of plant development, physiology and flowering time. In Arabidopsis thaliana (Mouse-ear cress), this protein is Protein HUA2-LIKE 2.